A 464-amino-acid polypeptide reads, in one-letter code: Glutamate decarboxylase beta (464 aa).

Lysine 275 carries the post-translational modification N6-(pyridoxal phosphate)lysine.

The protein belongs to the group II decarboxylase family. Pyridoxal 5'-phosphate serves as cofactor.

The enzyme catalyses L-glutamate + H(+) = 4-aminobutanoate + CO2. Converts internalized glutamate to GABA and increases the internal pH. Involved in glutamate-dependent acid resistance in gastric fluid. The sequence is that of Glutamate decarboxylase beta (gadB) from Listeria monocytogenes serovar 1/2a (strain ATCC BAA-679 / EGD-e).